A 237-amino-acid chain; its full sequence is Octopine transport system permease protein OccQ (237 aa).

Positions 22–222 (TGMTVAVASS…LITFISGQAF (201 aa)) constitute an ABC transmembrane type-1 domain. Transmembrane regions (helical) follow at residues 24–44 (MTVAVASSAFTIGLVFGCLGA), 72–92 (LVIYLFYFGSSSLISGVGSLF), 96–116 (GFVSAPAFLTGALAIGLVSAA), and 201–221 (FSFYLTAAALYLLITFISGQA).

Belongs to the binding-protein-dependent transport system permease family. HisMQ subfamily.

Its subcellular location is the cell inner membrane. In terms of biological role, component of the octopine active transport system probably consisting of four subunits: Q, M, P and T. In Rhizobium meliloti (Ensifer meliloti), this protein is Octopine transport system permease protein OccQ (occQ).